The sequence spans 315 residues: 4-diphosphocytidyl-2-C-methyl-D-erythritol kinase (315 aa).

The active site involves lysine 11. An ATP-binding site is contributed by 99 to 109; sequence PMAAGLAGGSA. Residue aspartate 141 is part of the active site.

The protein belongs to the GHMP kinase family. IspE subfamily.

It catalyses the reaction 4-CDP-2-C-methyl-D-erythritol + ATP = 4-CDP-2-C-methyl-D-erythritol 2-phosphate + ADP + H(+). It participates in isoprenoid biosynthesis; isopentenyl diphosphate biosynthesis via DXP pathway; isopentenyl diphosphate from 1-deoxy-D-xylulose 5-phosphate: step 3/6. Catalyzes the phosphorylation of the position 2 hydroxy group of 4-diphosphocytidyl-2C-methyl-D-erythritol. The polypeptide is 4-diphosphocytidyl-2-C-methyl-D-erythritol kinase (Synechocystis sp. (strain ATCC 27184 / PCC 6803 / Kazusa)).